We begin with the raw amino-acid sequence, 492 residues long: MTGMSREEVESLIQEVLEVYPEKARKDRNKHLAVNDPAVTQSKKCIISNKKSQPGLMTIRGCAYAGSKGVVWGPIKDMIHISHGPVGCGQYSRAGRRNYYIGTTGVNAFVTMNFTSDFQEKDIVFGGDKKLAKLIDEVETLFPLNKGISVQSECPIGLIGDDIESVSKVKGAELSKTIVPVRCEGFRGVSQSLGHHIANDAVRDWVLGKRDEDTTFASTPYDVAIIGDYNIGGDAWSSRILLEEMGLRCVAQWSGDGSISEIELTPKVKLNLVHCYRSMNYISRHMEEKYGIPWMEYNFFGPTKTIESLRAIAAKFDESIQKKCEEVIAKYKPEWEAVVAKYRPRLEGKRVMLYIGGLRPRHVIGAYEDLGMEVVGTGYEFAHNDDYDRTMKEMGDSTLLYDDVTGYEFEEFVKRIKPDLIGSGIKEKFIFQKMGIPFREMHSWDYSGPYHGFDGFAIFARDMDMTLNNPCWKKLQAPWEASEGAEKVAASA.

Residues cysteine 62, cysteine 88, and cysteine 154 each coordinate [8Fe-7S] cluster. Positions 275 and 442 each coordinate [7Fe-Mo-9S-C-homocitryl] cluster.

Belongs to the NifD/NifK/NifE/NifN family. As to quaternary structure, tetramer of two alpha and two beta chains. Forms complex with the iron protein (nitrogenase component 2). [8Fe-7S] cluster serves as cofactor. It depends on [7Fe-Mo-9S-C-homocitryl] cluster as a cofactor.

The catalysed reaction is N2 + 8 reduced [2Fe-2S]-[ferredoxin] + 16 ATP + 16 H2O = H2 + 8 oxidized [2Fe-2S]-[ferredoxin] + 2 NH4(+) + 16 ADP + 16 phosphate + 6 H(+). Nitrogenase holoenzyme is subject to 'conformational protection' by FeSII; under oxidizing conditions FeSII binds to the holoenzyme and reversibly protects it from oxidation. In terms of biological role, this molybdenum-iron protein is part of the nitrogenase complex that catalyzes the key enzymatic reactions in nitrogen fixation. The sequence is that of Nitrogenase molybdenum-iron protein alpha chain (nifD) from Azotobacter vinelandii.